Consider the following 181-residue polypeptide: Large ribosomal subunit protein uL5 (181 aa).

This sequence belongs to the universal ribosomal protein uL5 family. Part of the 50S ribosomal subunit; part of the 5S rRNA/L5/L18/L25 subcomplex. Contacts the 5S rRNA and the P site tRNA. Forms a bridge to the 30S subunit in the 70S ribosome.

Functionally, this is one of the proteins that bind and probably mediate the attachment of the 5S RNA into the large ribosomal subunit, where it forms part of the central protuberance. In the 70S ribosome it contacts protein S13 of the 30S subunit (bridge B1b), connecting the 2 subunits; this bridge is implicated in subunit movement. Contacts the P site tRNA; the 5S rRNA and some of its associated proteins might help stabilize positioning of ribosome-bound tRNAs. The polypeptide is Large ribosomal subunit protein uL5 (Mycoplasmopsis pulmonis (strain UAB CTIP) (Mycoplasma pulmonis)).